We begin with the raw amino-acid sequence, 287 residues long: 4-hydroxybenzoate octaprenyltransferase (287 aa).

The next 7 helical transmembrane spans lie at 23–40, 99–119, 141–161, 163–183, 213–233, 235–255, and 266–286; these read IGSLLLLWPTLWALWLAG, LFVVLVLLAFGLVLTLNTMTI, LPQFVLGAAFGWSIPMAYAAV, ESLPATCWMMFLAYICWTVAY, LIIGLLQFSMLALLLILGTMT, LGMPYYISLLVAGGMFIYQQI, and FKAFHNNKYAGMAIFIGVLFG.

The protein belongs to the UbiA prenyltransferase family. Requires Mg(2+) as cofactor.

It localises to the cell inner membrane. It catalyses the reaction all-trans-octaprenyl diphosphate + 4-hydroxybenzoate = 4-hydroxy-3-(all-trans-octaprenyl)benzoate + diphosphate. It participates in cofactor biosynthesis; ubiquinone biosynthesis. Functionally, catalyzes the prenylation of para-hydroxybenzoate (PHB) with an all-trans polyprenyl group. Mediates the second step in the final reaction sequence of ubiquinone-8 (UQ-8) biosynthesis, which is the condensation of the polyisoprenoid side chain with PHB, generating the first membrane-bound Q intermediate 3-octaprenyl-4-hydroxybenzoate. The sequence is that of 4-hydroxybenzoate octaprenyltransferase from Pectobacterium carotovorum subsp. carotovorum (strain PC1).